A 257-amino-acid chain; its full sequence is Gamma-secretase subunit APH-1B (257 aa).

The next 7 helical transmembrane spans lie at 5–25 (VFFG…VFTI), 32–52 (IIFL…SSLV), 71–91 (LLIF…FAYY), 115–135 (LLAY…SFVN), 158–178 (YSAF…IVFF), 186–206 (WGIL…TFIS), and 213–233 (LASA…AAGG).

The protein belongs to the APH-1 family. As to quaternary structure, probable component of the gamma-secretase complex, a complex composed of a presenilin homodimer (PSEN1 or PSEN2), nicastrin (NCSTN), APH1 (APH1A or APH1B) and PEN2. Such minimal complex is sufficient for secretase activity, although other components may exist. Interacts with PSEN1 and PSEN2. As to expression, weakly or not expressed in leukocytes, lung, placenta, small intestine, liver, kidney, spleen thymus, colon, skeletal muscle, heart and brain.

Its subcellular location is the membrane. Functionally, probable subunit of the gamma-secretase complex, an endoprotease complex that catalyzes the intramembrane cleavage of integral proteins such as Notch receptors and APP (amyloid-beta precursor protein). It probably represents a stabilizing cofactor for the presenilin homodimer that promotes the formation of a stable complex. Probably present in a minority of gamma-secretase complexes compared to APH1A. This Homo sapiens (Human) protein is Gamma-secretase subunit APH-1B (APH1B).